The chain runs to 542 residues: Aspartate kinase FUB3 (542 aa).

ACT domains lie at 404 to 472 (ILSN…VLPD) and 478 to 542 (LVGA…KSAI).

Belongs to the aspartokinase family.

It catalyses the reaction L-aspartate + ATP = 4-phospho-L-aspartate + ADP. It participates in mycotoxin biosynthesis. Aspartate kinase; part of the gene cluster that mediates the biosynthesis of fusaric acid, a mycotoxin with low to moderate toxicity to animals and humans, but with high phytotoxic properties. L-aspartate is suggested as fusaric acid amino acid precursor that is activated and further processed to O-acetyl-L-homoserine by cluster enzymes aspartate kinase FUB3 and homoserine O-acetyltransferase FUB5, as well as enzymes of the primary metabolism. The polyketide synthase (PKS) FUB1 generates the triketide trans-2-hexenal which is presumptively released by the hydrolase FUB4 and linked to the NRPS-bound amino acid precursor by NAD(P)-dependent dehydrogenase FUB6. FUB1, FUB4, and the non-canonical NRPS Fub8 may form an enzyme complex. Further processing of the NRPS-bound intermediate might be carried out by FUB6 and the sulfhydrylase FUB7, enabling a spontaneous electrocyclization to close the carbon backbone of fusaric acid. Dihydrofusaric acid is likely to be released via reduction by the thioester reductase (TR) domain of FUB8 whereupon the final oxidation to fusaric acid may (also) be performed by the FMN-dependent dehydrogenase FUB9. This is Aspartate kinase FUB3 from Fusarium oxysporum f. sp. lycopersici (strain 4287 / CBS 123668 / FGSC 9935 / NRRL 34936) (Fusarium vascular wilt of tomato).